The following is a 129-amino-acid chain: Small ribosomal subunit protein uS8 (129 aa).

It belongs to the universal ribosomal protein uS8 family. As to quaternary structure, part of the 30S ribosomal subunit.

Its function is as follows. One of the primary rRNA binding proteins, it binds directly to 16S rRNA central domain where it helps coordinate assembly of the platform of the 30S subunit. This chain is Small ribosomal subunit protein uS8, found in Thermofilum pendens (strain DSM 2475 / Hrk 5).